We begin with the raw amino-acid sequence, 689 residues long: Beta-adrenergic receptor kinase 1 (689 aa).

The segment at 1–190 (MADLEAVLAD…ELNIHLTMND (190 aa)) is N-terminal. In terms of domain architecture, RGS spans 54-175 (TFEKIFSQKL…IESEKFTRFC (122 aa)). The region spanning 191–453 (FSVHRIIGRG…AQEVKEDPFF (263 aa)) is the Protein kinase domain. ATP is bound by residues 197–205 (IGRGGFGEV) and Lys220. The active-site Proton acceptor is the Asp317. One can recognise an AGC-kinase C-terminal domain in the interval 454-521 (KAVDWQMVLL…TISERWQQEV (68 aa)). One can recognise a PH domain in the interval 558–652 (DCIMHGYMSK…WKKELRDVYR (95 aa)). The tract at residues 665–689 (KNKPRSPVVELSKMPLTQRGSANGL) is disordered. Ser670 carries the phosphoserine modification.

This sequence belongs to the protein kinase superfamily. AGC Ser/Thr protein kinase family. GPRK subfamily. As to quaternary structure, interacts with the heterodimer formed by GNB1 and GNG2. Interacts with GIT1. Interacts with, and phosphorylates chemokine-stimulated CCR5. Interacts with ARRB1. Interacts with LPAR1 and LPAR2. Interacts with RALA in response to LPAR1 activation. ADRBK1 and RALA mutually inhibit each other's binding to LPAR1. Interacts with ADRB2.

Its subcellular location is the cytoplasm. The protein resides in the cell membrane. It is found in the postsynapse. It localises to the presynapse. The catalysed reaction is [beta-adrenergic receptor] + ATP = [beta-adrenergic receptor]-phosphate + ADP + H(+). In contrast to other AGC family kinases, the catalytic activity is solely regulated by the binding of substrates and ligands, not by phosphorylation of the kinase domain. Its function is as follows. Specifically phosphorylates the agonist-occupied form of the beta-adrenergic and closely related receptors, probably inducing a desensitization of them. Does not act on HTR1B/5-hydroxytryptamine 1B receptor. Key regulator of LPAR1 signaling. Competes with RALA for binding to LPAR1 thus affecting the signaling properties of the receptor. Desensitizes LPAR1 and LPAR2 in a phosphorylation-independent manner. Inhibits relaxation of airway smooth muscle in response to blue light. The polypeptide is Beta-adrenergic receptor kinase 1 (Didelphis virginiana (North American opossum)).